We begin with the raw amino-acid sequence, 323 residues long: Acetyl esterase (323 aa).

Positions 91-93 match the Involved in the stabilization of the negatively charged intermediate by the formation of the oxyanion hole motif; sequence HGG. Residues serine 165, aspartate 262, and histidine 292 contribute to the active site.

Belongs to the 'GDXG' lipolytic enzyme family. Homodimer. Interacts with MalT and MelA.

Its subcellular location is the cytoplasm. Displays esterase activity towards short chain fatty esters (acyl chain length of up to 8 carbons). Able to hydrolyze triacetylglycerol (triacetin) and tributyrylglycerol (tributyrin), but not trioleylglycerol (triolein) or cholesterol oleate. Negatively regulates MalT activity by antagonizing maltotriose binding. Inhibits MelA galactosidase activity. The sequence is that of Acetyl esterase from Salmonella dublin (strain CT_02021853).